The following is a 265-amino-acid chain: Di-trans,poly-cis-undecaprenyl-diphosphate synthase (265 aa).

Positions 236-238 match the RXG motif; crucial for prenyltransferase activity motif; it reads RFG.

Belongs to the UPP synthase family. It depends on Mg(2+) as a cofactor.

It catalyses the reaction 8 isopentenyl diphosphate + (2E,6E)-farnesyl diphosphate = di-trans,octa-cis-undecaprenyl diphosphate + 8 diphosphate. It functions in the pathway protein modification; protein glycosylation. Its pathway is lipid metabolism. Its function is as follows. Cis-prenyl transferase involved in the synthesis of dolichol, a long-chain polyprenol that is utilized as a sugar carrier in protein glycosylation in the endoplasmic reticulum (ER). Catalyzes the sequential condensation of isopentenyl pyrophosphate (IPP) with farnesyl pyrophosphate (FPP) to produce a polyprenyl pyrophosphate which contains 11 (major) and 12 (minor) isoprene units. This Giardia intestinalis (strain ATCC 50803 / WB clone C6) (Giardia lamblia) protein is Di-trans,poly-cis-undecaprenyl-diphosphate synthase.